Consider the following 106-residue polypeptide: Large ribosomal subunit protein bL21c (106 aa).

Belongs to the bacterial ribosomal protein bL21 family. Part of the 50S ribosomal subunit.

It localises to the plastid. The protein localises to the chloroplast. Functionally, this protein binds to 23S rRNA. This Gracilaria tenuistipitata var. liui (Red alga) protein is Large ribosomal subunit protein bL21c.